A 476-amino-acid polypeptide reads, in one-letter code: Adenosylhomocysteinase (476 aa).

Residues T67, D142, and E202 each coordinate substrate. Residue 203-205 (TTT) coordinates NAD(+). Substrate is bound by residues K232 and D236. Residues N237, 266–271 (GYGDVG), E289, N324, 345–347 (IGH), and N390 each bind NAD(+).

Belongs to the adenosylhomocysteinase family. It depends on NAD(+) as a cofactor.

Its subcellular location is the cytoplasm. It carries out the reaction S-adenosyl-L-homocysteine + H2O = L-homocysteine + adenosine. It participates in amino-acid biosynthesis; L-homocysteine biosynthesis; L-homocysteine from S-adenosyl-L-homocysteine: step 1/1. Functionally, may play a key role in the regulation of the intracellular concentration of adenosylhomocysteine. The polypeptide is Adenosylhomocysteinase (Synechococcus sp. (strain WH7803)).